The primary structure comprises 72 residues: DNA-directed RNA polymerase subunit omega (72 aa).

The protein belongs to the RNA polymerase subunit omega family. The RNAP catalytic core consists of 2 alpha, 1 beta, 1 beta' and 1 omega subunit. When a sigma factor is associated with the core the holoenzyme is formed, which can initiate transcription.

It carries out the reaction RNA(n) + a ribonucleoside 5'-triphosphate = RNA(n+1) + diphosphate. In terms of biological role, promotes RNA polymerase assembly. Latches the N- and C-terminal regions of the beta' subunit thereby facilitating its interaction with the beta and alpha subunits. The sequence is that of DNA-directed RNA polymerase subunit omega from Clostridium kluyveri (strain NBRC 12016).